Consider the following 930-residue polypeptide: Endoplasmic reticulum aminopeptidase 1 (930 aa).

Residues 1–2 are Cytoplasmic-facing; sequence MP. The helical; Signal-anchor for type II membrane protein transmembrane segment at 3–23 threads the bilayer; it reads SLLSLVLTFLAVSSPSCCQNS. Topologically, residues 24-930 are lumenal; sequence DTASPKASNG…WLQKERQELL (907 aa). N-linked (GlcNAc...) asparagine glycans are attached at residues Asn-59 and Asn-143. Residues Glu-172 and 306–310 each bind substrate; that span reads GAMEN. A Zn(2+)-binding site is contributed by His-342. Glu-343 (proton acceptor) is an active-site residue. Zn(2+) is bound by residues His-346 and Glu-365. Cys-393 and Cys-432 form a disulfide bridge. N-linked (GlcNAc...) asparagine glycans are attached at residues Asn-403 and Asn-655. A disulfide bridge links Cys-725 with Cys-732. N-linked (GlcNAc...) asparagine glycosylation is found at Asn-749 and Asn-890.

It belongs to the peptidase M1 family. Monomer. May also exist as a heterodimer; with ERAP2. Interacts with RBMX. Zn(2+) serves as cofactor. Post-translationally, N-glycosylated. Ubiquitous.

The protein resides in the endoplasmic reticulum membrane. In terms of biological role, aminopeptidase that plays a central role in peptide trimming, a step required for the generation of most HLA class I-binding peptides. Peptide trimming is essential to customize longer precursor peptides to fit them to the correct length required for presentation on MHC class I molecules. Strongly prefers substrates 9-16 residues long. Rapidly degrades 13-mer to a 9-mer and then stops. Preferentially hydrolyzes the residue Leu and peptides with a hydrophobic C-terminus, while it has weak activity toward peptides with charged C-terminus. May play a role in the inactivation of peptide hormones. May be involved in the regulation of blood pressure through the inactivation of angiotensin II and/or the generation of bradykinin in the kidney. The sequence is that of Endoplasmic reticulum aminopeptidase 1 (Erap1) from Rattus norvegicus (Rat).